The chain runs to 77 residues: DNA-directed RNA polymerase subunit epsilon (77 aa).

It belongs to the RNA polymerase subunit epsilon family. As to quaternary structure, RNAP is composed of a core of 2 alpha, a beta and a beta' subunit. The core is associated with a delta subunit, and at least one of epsilon or omega. When a sigma factor is associated with the core the holoenzyme is formed, which can initiate transcription.

The enzyme catalyses RNA(n) + a ribonucleoside 5'-triphosphate = RNA(n+1) + diphosphate. A non-essential component of RNA polymerase (RNAP). The polypeptide is DNA-directed RNA polymerase subunit epsilon (Streptococcus pneumoniae serotype 2 (strain D39 / NCTC 7466)).